An 876-amino-acid chain; its full sequence is ATPase WRNIP1 (876 aa).

2 stretches are compositionally biased toward low complexity: residues 56 to 85 and 104 to 175; these read NKSNGNNSINNNNNNKNTPTKPNLNLTPTK and NNNN…INNN. The segment at 56–175 is disordered; that stretch reads NKSNGNNSIN…NNNNNNINNN (120 aa). ATP is bound at residue 240 to 246; sequence PGCGKTT. 3 disordered regions span residues 621–647, 714–737, and 833–876; these read KDRQQSQDQTQRSSQQQQQQQTQPQQQ, INNKNNDSNIIKKNVNNSLDLNPT, and ETKA…SLDF. 2 stretches are compositionally biased toward low complexity: residues 626 to 647 and 714 to 731; these read SQDQTQRSSQQQQQQQTQPQQQ and INNKNNDSNIIKKNVNNS. Polar residues predominate over residues 835-849; that stretch reads KAISSTDTKESVSIN. Positions 850 to 863 are enriched in basic and acidic residues; that stretch reads DSDKDLTTTHKNEQ.

Belongs to the AAA ATPase family. RarA/MGS1/WRNIP1 subfamily.

It is found in the nucleus. The enzyme catalyses ATP + H2O = ADP + phosphate + H(+). Its function is as follows. Functions as a modulator for initiation or reinitiation events during DNA polymerase delta-mediated DNA synthesis. Has an intrinsic ATPase activity that functions as a sensor of DNA damage or of arrested replication forks and regulates the extent of DNA synthesis. This is ATPase WRNIP1 from Dictyostelium discoideum (Social amoeba).